The primary structure comprises 313 residues: MNKALPQAIFLMGPTASGKTDLAIQLRKRFPVELISVDSALIYKGMDIGTAKPNETELLQAPHRLIDILDPAESYSVAEFRRDALKEMEDIVAQGKIPLLVGGTMLYYKALLEGLSPLPAADADIRAQIEQEAETLGWEAMHDQLKEIDPVSAERIHPNDPQRLSRALEVFRISGKTLTELTQVKGDALPYQVHQFAIAPKERAEIHRRIELRFDNMMKGGFEEEVRSLYERDDLHADLPSIRCVGYRQMWEYFDGEGTLDDAIFRGICATRQLAKRQITWLRSWKDLTWLDSDNIDGALQTISDRLDKKQAQ.

13–20 lines the ATP pocket; sequence GPTASGKT. Residue 15 to 20 coordinates substrate; that stretch reads TASGKT. Interaction with substrate tRNA regions lie at residues 38–41, 162–166, 243–248, and 276–283; these read DSAL, QRLSR, RCVGYR, and KRQITWLR.

Belongs to the IPP transferase family. As to quaternary structure, monomer. The cofactor is Mg(2+).

It catalyses the reaction adenosine(37) in tRNA + dimethylallyl diphosphate = N(6)-dimethylallyladenosine(37) in tRNA + diphosphate. Its function is as follows. Catalyzes the transfer of a dimethylallyl group onto the adenine at position 37 in tRNAs that read codons beginning with uridine, leading to the formation of N6-(dimethylallyl)adenosine (i(6)A). In Aliivibrio salmonicida (strain LFI1238) (Vibrio salmonicida (strain LFI1238)), this protein is tRNA dimethylallyltransferase.